Here is a 694-residue protein sequence, read N- to C-terminus: Elongation factor G (694 aa).

A tr-type G domain is found at 8–287; that stretch reads EDYRNFGIMA…AVVEFLPAPT (280 aa). GTP-binding positions include 17–24, 86–90, and 140–143; these read AHIDAGKT, DTPGH, and NKMD.

It belongs to the TRAFAC class translation factor GTPase superfamily. Classic translation factor GTPase family. EF-G/EF-2 subfamily.

It is found in the cytoplasm. Its function is as follows. Catalyzes the GTP-dependent ribosomal translocation step during translation elongation. During this step, the ribosome changes from the pre-translocational (PRE) to the post-translocational (POST) state as the newly formed A-site-bound peptidyl-tRNA and P-site-bound deacylated tRNA move to the P and E sites, respectively. Catalyzes the coordinated movement of the two tRNA molecules, the mRNA and conformational changes in the ribosome. This Brucella anthropi (strain ATCC 49188 / DSM 6882 / CCUG 24695 / JCM 21032 / LMG 3331 / NBRC 15819 / NCTC 12168 / Alc 37) (Ochrobactrum anthropi) protein is Elongation factor G.